The primary structure comprises 279 residues: Phosphate-binding protein PstS (279 aa).

An N-terminal signal peptide occupies residues 1 to 18 (MKKVIILIFMLSTSLLYN). A lipid anchor (N-palmitoyl cysteine) is attached at C19. C19 carries the S-diacylglycerol cysteine lipid modification. Phosphate-binding positions include 33 to 35 (STT), S63, and 151 to 153 (SGS).

The protein belongs to the PstS family. As to quaternary structure, monomer (in vitro). The complex is composed of two ATP-binding proteins (PstB), two transmembrane proteins (PstC and PstA) and a solute-binding protein (PstS).

It is found in the cell membrane. In terms of biological role, binds inorganic phosphate with a Kd of 1.2 uM. Part of the ABC transporter complex PstSACB involved in phosphate import. This Borreliella burgdorferi (strain ATCC 35210 / DSM 4680 / CIP 102532 / B31) (Borrelia burgdorferi) protein is Phosphate-binding protein PstS.